Consider the following 277-residue polypeptide: Small ribosomal subunit protein uS2 (277 aa).

Positions 226-277 (GQQARADRGEDLGAAVEPVAEPALVEEAAAPVTEDEQVPAEAAAETERQSDA) are disordered. The segment covering 239–257 (AAVEPVAEPALVEEAAAPV) has biased composition (low complexity).

This sequence belongs to the universal ribosomal protein uS2 family.

This Sphingopyxis alaskensis (strain DSM 13593 / LMG 18877 / RB2256) (Sphingomonas alaskensis) protein is Small ribosomal subunit protein uS2.